The chain runs to 565 residues: Sulfite reductase [NADPH] hemoprotein beta-component (565 aa).

Residues Cys-429, Cys-435, Cys-474, and Cys-478 each contribute to the [4Fe-4S] cluster site. Cys-478 provides a ligand contact to siroheme.

It belongs to the nitrite and sulfite reductase 4Fe-4S domain family. As to quaternary structure, alpha(8)-beta(8). The alpha component is a flavoprotein, the beta component is a hemoprotein. Siroheme serves as cofactor. [4Fe-4S] cluster is required as a cofactor.

It catalyses the reaction hydrogen sulfide + 3 NADP(+) + 3 H2O = sulfite + 3 NADPH + 4 H(+). It participates in sulfur metabolism; hydrogen sulfide biosynthesis; hydrogen sulfide from sulfite (NADPH route): step 1/1. Its function is as follows. Component of the sulfite reductase complex that catalyzes the 6-electron reduction of sulfite to sulfide. This is one of several activities required for the biosynthesis of L-cysteine from sulfate. This chain is Sulfite reductase [NADPH] hemoprotein beta-component, found in Shewanella pealeana (strain ATCC 700345 / ANG-SQ1).